We begin with the raw amino-acid sequence, 199 residues long: UPF0316 protein LA_0606 (199 aa).

A run of 2 helical transmembrane segments spans residues 47 to 67 and 73 to 93; these read IAAS…TQVI and VFCY…GMIL.

This sequence belongs to the UPF0316 family.

Its subcellular location is the cell membrane. The protein is UPF0316 protein LA_0606 of Leptospira interrogans serogroup Icterohaemorrhagiae serovar Lai (strain 56601).